Consider the following 218-residue polypeptide: UPF0598 protein C8orf82 homolog (218 aa).

Belongs to the UPF0598 family.

The chain is UPF0598 protein C8orf82 homolog from Rattus norvegicus (Rat).